The sequence spans 61 residues: UPF0370 protein SG1720 (61 aa).

The helical transmembrane segment at 3–23 (WLADYWWVVLLVLAGMLIGGV) threads the bilayer. Over residues 37-47 (NRPELPPHRDN) the composition is skewed to basic and acidic residues. The disordered stretch occupies residues 37 to 61 (NRPELPPHRDNNAQWDEEDDWPKKP). A compositionally biased stretch (acidic residues) spans 51–61 (WDEEDDWPKKP).

Belongs to the UPF0370 family.

It is found in the cell membrane. This chain is UPF0370 protein SG1720, found in Sodalis glossinidius (strain morsitans).